The following is a 471-amino-acid chain: Argininosuccinate lyase (471 aa).

The protein belongs to the lyase 1 family. Argininosuccinate lyase subfamily.

Its subcellular location is the cytoplasm. The enzyme catalyses 2-(N(omega)-L-arginino)succinate = fumarate + L-arginine. It participates in amino-acid biosynthesis; L-arginine biosynthesis; L-arginine from L-ornithine and carbamoyl phosphate: step 3/3. The protein is Argininosuccinate lyase of Cereibacter sphaeroides (strain ATCC 17023 / DSM 158 / JCM 6121 / CCUG 31486 / LMG 2827 / NBRC 12203 / NCIMB 8253 / ATH 2.4.1.) (Rhodobacter sphaeroides).